Here is a 78-residue protein sequence, read N- to C-terminus: Keratin-associated protein 6-5 (78 aa).

A 25 X 2 AA repeats of G-[YCGS] region spans residues 3–76 (GYYGNYYGGR…GSGYGSGFGY (74 aa)).

Belongs to the KRTAP type 6 family. In terms of assembly, interacts with hair keratins. As to expression, strong expression in narrowly defined pattern restricted to the lower and middle cortical regions of the hair shaft in both developing and cycling hair. During hair follicle regression (catagen), expression levels decrease until expression is no longer detectable in follicles at resting stage (telogen).

Its function is as follows. In the hair cortex, hair keratin intermediate filaments are embedded in an interfilamentous matrix, consisting of hair keratin-associated proteins (KRTAP), which are essential for the formation of a rigid and resistant hair shaft through their extensive disulfide bond cross-linking with abundant cysteine residues of hair keratins. The matrix proteins include the high-sulfur and high-glycine-tyrosine keratins. The protein is Keratin-associated protein 6-5 (Krtap6-5) of Mus musculus (Mouse).